A 225-amino-acid chain; its full sequence is uncharacterized protein (225 aa).

This is an uncharacterized protein from Ureaplasma parvum serovar 3 (strain ATCC 700970).